The following is a 364-amino-acid chain: Aminomethyltransferase (364 aa).

The protein belongs to the GcvT family. In terms of assembly, the glycine cleavage system is composed of four proteins: P, T, L and H.

The enzyme catalyses N(6)-[(R)-S(8)-aminomethyldihydrolipoyl]-L-lysyl-[protein] + (6S)-5,6,7,8-tetrahydrofolate = N(6)-[(R)-dihydrolipoyl]-L-lysyl-[protein] + (6R)-5,10-methylene-5,6,7,8-tetrahydrofolate + NH4(+). The glycine cleavage system catalyzes the degradation of glycine. The protein is Aminomethyltransferase of Citrobacter koseri (strain ATCC BAA-895 / CDC 4225-83 / SGSC4696).